The following is a 340-amino-acid chain: DNA-directed RNA polymerase subunit alpha (340 aa).

Residues 1–226 (MLIAQRPSLT…ELFGLARELN (226 aa)) are alpha N-terminal domain (alpha-NTD). Residues 243-340 (LAADLALPIE…DAGFVETEQY (98 aa)) are alpha C-terminal domain (alpha-CTD).

The protein belongs to the RNA polymerase alpha chain family. In terms of assembly, homodimer. The RNAP catalytic core consists of 2 alpha, 1 beta, 1 beta' and 1 omega subunit. When a sigma factor is associated with the core the holoenzyme is formed, which can initiate transcription. Post-translationally, the last 19 amino acids in the C-terminal part are cleaved in the spore.

The catalysed reaction is RNA(n) + a ribonucleoside 5'-triphosphate = RNA(n+1) + diphosphate. Its function is as follows. DNA-dependent RNA polymerase catalyzes the transcription of DNA into RNA using the four ribonucleoside triphosphates as substrates. This chain is DNA-directed RNA polymerase subunit alpha, found in Streptomyces granaticolor.